The primary structure comprises 423 residues: Adenosylmethionine-8-amino-7-oxononanoate aminotransferase (423 aa).

Residue tryptophan 51 participates in substrate binding. 111–112 (GS) lines the pyridoxal 5'-phosphate pocket. Tyrosine 144 serves as a coordination point for substrate. Aspartate 243 is a pyridoxal 5'-phosphate binding site. Positions 272 and 306 each coordinate substrate. Lysine 272 carries the N6-(pyridoxal phosphate)lysine modification. Pyridoxal 5'-phosphate is bound at residue 307 to 308 (PT). Residue arginine 390 participates in substrate binding.

Belongs to the class-III pyridoxal-phosphate-dependent aminotransferase family. BioA subfamily. Homodimer. Pyridoxal 5'-phosphate serves as cofactor.

The protein localises to the cytoplasm. It carries out the reaction (8S)-8-amino-7-oxononanoate + S-adenosyl-L-methionine = S-adenosyl-4-methylsulfanyl-2-oxobutanoate + (7R,8S)-7,8-diammoniononanoate. Its pathway is cofactor biosynthesis; biotin biosynthesis; 7,8-diaminononanoate from 8-amino-7-oxononanoate (SAM route): step 1/1. In terms of biological role, catalyzes the transfer of the alpha-amino group from S-adenosyl-L-methionine (SAM) to 7-keto-8-aminopelargonic acid (KAPA) to form 7,8-diaminopelargonic acid (DAPA). It is the only aminotransferase known to utilize SAM as an amino donor. In Corynebacterium glutamicum (strain ATCC 13032 / DSM 20300 / JCM 1318 / BCRC 11384 / CCUG 27702 / LMG 3730 / NBRC 12168 / NCIMB 10025 / NRRL B-2784 / 534), this protein is Adenosylmethionine-8-amino-7-oxononanoate aminotransferase.